The sequence spans 271 residues: 3-methyl-2-oxobutanoate hydroxymethyltransferase (271 aa).

Residues Asp53 and Asp92 each coordinate Mg(2+). Residues Asp53–Ser54, Asp92, and Lys120 each bind 3-methyl-2-oxobutanoate. Mg(2+) is bound at residue Glu122. Glu189 functions as the Proton acceptor in the catalytic mechanism.

The protein belongs to the PanB family. Homodecamer; pentamer of dimers. Mg(2+) serves as cofactor.

The protein resides in the cytoplasm. It carries out the reaction 3-methyl-2-oxobutanoate + (6R)-5,10-methylene-5,6,7,8-tetrahydrofolate + H2O = 2-dehydropantoate + (6S)-5,6,7,8-tetrahydrofolate. It functions in the pathway cofactor biosynthesis; (R)-pantothenate biosynthesis; (R)-pantoate from 3-methyl-2-oxobutanoate: step 1/2. Catalyzes the reversible reaction in which hydroxymethyl group from 5,10-methylenetetrahydrofolate is transferred onto alpha-ketoisovalerate to form ketopantoate. The sequence is that of 3-methyl-2-oxobutanoate hydroxymethyltransferase from Paraburkholderia phymatum (strain DSM 17167 / CIP 108236 / LMG 21445 / STM815) (Burkholderia phymatum).